We begin with the raw amino-acid sequence, 340 residues long: Fructose-1,6-bisphosphatase class 1 (340 aa).

Glu107, Asp126, Leu128, and Asp129 together coordinate Mg(2+). Asn215 is a substrate binding site. Glu287 contacts Mg(2+).

It belongs to the FBPase class 1 family. Homotetramer. The cofactor is Mg(2+).

Its subcellular location is the cytoplasm. It catalyses the reaction beta-D-fructose 1,6-bisphosphate + H2O = beta-D-fructose 6-phosphate + phosphate. It participates in carbohydrate biosynthesis; gluconeogenesis. The chain is Fructose-1,6-bisphosphatase class 1 from Brucella suis (strain ATCC 23445 / NCTC 10510).